The following is a 765-amino-acid chain: Transcription factor RFX3 (765 aa).

Positions 189-264 (HLQWLLDNYE…YHYYGIRVKP (76 aa)) form a DNA-binding region, RFX-type winged-helix.

It belongs to the RFX family.

Its subcellular location is the nucleus. Transcription factor required for ciliogenesis and islet cell differentiation during endocrine pancreas development. The chain is Transcription factor RFX3 (rfx3) from Danio rerio (Zebrafish).